The following is a 135-amino-acid chain: uncharacterized protein (135 aa).

Residues 100-125 (KESPATSSEDISSCSDCDSERLQSDD) are disordered. The span at 106-115 (SSEDISSCSD) shows a compositional bias: low complexity.

This is an uncharacterized protein from Microplitis demolitor (Parasitoid wasp).